Here is a 179-residue protein sequence, read N- to C-terminus: Inner membrane-spanning protein YciB (179 aa).

5 helical membrane-spanning segments follow: residues 22–42 (IYAA…YSWV), 50–70 (MALI…FFHN), 76–96 (WKVT…QWVM), 121–141 (LAWA…AFWL), and 149–169 (FKVF…GVYI).

Belongs to the YciB family.

The protein localises to the cell inner membrane. Its function is as follows. Plays a role in cell envelope biogenesis, maintenance of cell envelope integrity and membrane homeostasis. The polypeptide is Inner membrane-spanning protein YciB (Salmonella arizonae (strain ATCC BAA-731 / CDC346-86 / RSK2980)).